We begin with the raw amino-acid sequence, 118 residues long: Beta-defensin 126 (118 aa).

A signal peptide spans 1–20; sequence MKSLLFTLAVFMLLAQLVSG. Residues 21-63 are in vitro binds to LPS, mediates antimicrobial activity and inhibits LPS-mediated inflammation; sequence SWYVKKCLNDVGICKKKCKPEELHVKNGWAMCGKQRDCCVPAD. 3 disulfides stabilise this stretch: C27/C58, C34/C52, and C38/C59.

It belongs to the beta-defensin family. As to quaternary structure, homodimer or homooligomer; disulfide-linked. In terms of processing, O-glycosylated; glycans contain alpha(2,3)-linked sialic acids.

Its subcellular location is the secreted. Highly glycosylated atypical beta-defensin involved in several aspects of sperm function. Facilitates sperm transport in the female reproductive tract and contributes to sperm protection against immunodetection; both functions are probably implicating the negative surface charge provided by its O-linked oligosaccharides in the sperm glycocalyx. Involved in binding of sperm to oviductal epithelial cells to form a sperm reservoir until ovulation. Release from the sperm surface during capacitation and ovaluation by an elevation of oviductal fluid pH is unmasking other surface components and allows sperm to penetrate the cumulus matrix and bind to the zona pellucida of the oocyte. In vitro has antimicrobial activity and may inhibit LPS-mediated inflammation. This is Beta-defensin 126 (DEFB126) from Pongo pygmaeus (Bornean orangutan).